A 427-amino-acid polypeptide reads, in one-letter code: Enolase (427 aa).

Gln163 is a binding site for (2R)-2-phosphoglycerate. Glu205 functions as the Proton donor in the catalytic mechanism. The Mg(2+) site is built by Asp242, Glu285, and Asp312. Residues Lys337, Arg366, Ser367, and Lys388 each contribute to the (2R)-2-phosphoglycerate site. Lys337 serves as the catalytic Proton acceptor.

This sequence belongs to the enolase family. The cofactor is Mg(2+).

The protein localises to the cytoplasm. Its subcellular location is the secreted. It is found in the cell surface. The enzyme catalyses (2R)-2-phosphoglycerate = phosphoenolpyruvate + H2O. It participates in carbohydrate degradation; glycolysis; pyruvate from D-glyceraldehyde 3-phosphate: step 4/5. In terms of biological role, catalyzes the reversible conversion of 2-phosphoglycerate (2-PG) into phosphoenolpyruvate (PEP). It is essential for the degradation of carbohydrates via glycolysis. The sequence is that of Enolase from Janthinobacterium sp. (strain Marseille) (Minibacterium massiliensis).